The chain runs to 166 residues: Putative peroxisomal peroxiredoxin (166 aa).

The Thioredoxin domain occupies 5 to 166 (FPEDVKFLYI…SGVDAVLAAL (162 aa)). Cysteine 56 acts as the Cysteine sulfenic acid (-SOH) intermediate in catalysis.

The protein belongs to the peroxiredoxin family. Prx5 subfamily. In terms of assembly, homodimer; disulfide-linked, upon oxidation.

It catalyses the reaction a hydroperoxide + [protein]-dithiol = [protein]-disulfide + an alcohol + H2O. Its function is as follows. Thiol-specific peroxidase that catalyzes the reduction of hydrogen peroxide and organic hydroperoxides to water and alcohols, respectively. Plays a role in cell protection against oxidative stress by detoxifying peroxides and as sensor of hydrogen peroxide-mediated signaling events. This is Putative peroxisomal peroxiredoxin from Lipomyces kononenkoae (Yeast).